We begin with the raw amino-acid sequence, 190 residues long: MASRGTTETSKLKQNLEEQLDRLMQQLQDLEECREELDADEYEETKKETLEQLSEINDSLKKIMSGDMTLVDELSGMQLAIQAAISQAFKTPEVIRMFAKKQPRQLRTRLAEMDRDLMVGKLGRDLYTQQKVEILTALRKLGEKLTQDDETFLSANAGAALSQFEKVSSDLGSGDKVFALASFEVEKAKQ.

A coiled-coil region spans residues 6–64 (TTETSKLKQNLEEQLDRLMQQLQDLEECREELDADEYEETKKETLEQLSEINDSLKKIM).

The protein belongs to the CTNNBIP1 family. As to quaternary structure, does not interact with CTNNB1.

This is Protein LZIC (LZIC) from Gallus gallus (Chicken).